Consider the following 49-residue polypeptide: Agglutinin-1 (49 aa).

Homooligomer. In terms of processing, glycosylated.

Beta-galactoside specific lectin. Has a hemagglutinating activity on erythrocytes. This Pomacea flagellata (Apple snail) protein is Agglutinin-1.